The following is a 287-amino-acid chain: Very long chain fatty acid elongase 4 (287 aa).

A run of 3 helical transmembrane segments spans residues 33–53, 64–84, and 115–135; these read ILVY…EHIM, PFVF…YSCV, and FWVF…VFLV. A HxxHH motif motif is present at residues 145–149; the sequence is HWYHH. The Nucleophile role is filled by H148. Helical transmembrane passes span 150 to 170, 172 to 192, 199 to 219, and 241 to 261; these read LTVA…GLWF, TMNY…ACGM, IAPF…LIVL, and LGLV…GKLY.

Belongs to the ELO family.

It localises to the membrane. The enzyme catalyses a very-long-chain acyl-CoA + malonyl-CoA + H(+) = a very-long-chain 3-oxoacyl-CoA + CO2 + CoA. Functionally, involved in the synthesis of fatty acids. Elongates C16:0 and C18:0 fatty acids to C26:0, with C24:0 being the main product. This Trypanosoma cruzi (strain CL Brener) protein is Very long chain fatty acid elongase 4.